Consider the following 160-residue polypeptide: MVKAIWAMDQNGLIGNGNSLPWRIKAELQHFRQTTLHQDVLMGSATYLSLPPVFSERNVYILTRNLNFNPPDKGCLTKVIHEYENFIQPYLHHPDKHLYICGGAQVYEQLIPRCDALIVSTIFGKYTGDKYLKVDFSPFELTKEISFAEFKVAYYHKIAR.

Residues 1–160 (MVKAIWAMDQ…KVAYYHKIAR (160 aa)) form the DHFR domain. Residue 5-7 (IWA) participates in substrate binding. NADP(+) contacts are provided by residues 6-7 (WA) and 14-19 (IGNGNS). The substrate site is built by E27 and R32. An NADP(+)-binding site is contributed by 43 to 46 (GSAT). Position 57 (R57) interacts with substrate. Residues 62–65 (LTRN) and 101–106 (CGGAQV) each bind NADP(+). Residue S120 coordinates substrate.

It belongs to the dihydrofolate reductase family.

The enzyme catalyses (6S)-5,6,7,8-tetrahydrofolate + NADP(+) = 7,8-dihydrofolate + NADPH + H(+). Its pathway is cofactor biosynthesis; tetrahydrofolate biosynthesis; 5,6,7,8-tetrahydrofolate from 7,8-dihydrofolate: step 1/1. In terms of biological role, key enzyme in folate metabolism. Catalyzes an essential reaction for de novo glycine and purine synthesis, and for DNA precursor synthesis. This chain is Dihydrofolate reductase (folA), found in Mycoplasma pneumoniae (strain ATCC 29342 / M129 / Subtype 1) (Mycoplasmoides pneumoniae).